A 272-amino-acid chain; its full sequence is Small ribosomal subunit protein uS3 (272 aa).

Residues 43–111 (IRELMTTGME…QIQLNILEVK (69 aa)) form the KH type-2 domain. The disordered stretch occupies residues 218–272 (AKEAAQPSGRGRGGERRGGGERRRRNDRAERAPRQENAGAGAETPAAAPAEGGNA). Basic and acidic residues predominate over residues 229–238 (RGGERRGGGE). Residues 253-272 (ENAGAGAETPAAAPAEGGNA) show a composition bias toward low complexity.

This sequence belongs to the universal ribosomal protein uS3 family. As to quaternary structure, part of the 30S ribosomal subunit. Forms a tight complex with proteins S10 and S14.

Functionally, binds the lower part of the 30S subunit head. Binds mRNA in the 70S ribosome, positioning it for translation. The protein is Small ribosomal subunit protein uS3 of Micrococcus luteus (strain ATCC 4698 / DSM 20030 / JCM 1464 / CCM 169 / CCUG 5858 / IAM 1056 / NBRC 3333 / NCIMB 9278 / NCTC 2665 / VKM Ac-2230) (Micrococcus lysodeikticus).